The primary structure comprises 107 residues: Biphenyl 2,3-dioxygenase, ferredoxin component (107 aa).

The region spanning 4 to 99 (TKICSSGDLA…VKLEGDDVLV (96 aa)) is the Rieske domain. The [2Fe-2S] cluster site is built by Cys-43, His-45, Cys-62, and His-65.

The protein belongs to the bacterial ring-hydroxylating dioxygenase ferredoxin component family. As to quaternary structure, the multicomponent biphenyl dioxygenase system is composed of a ferredoxin reductase (BphA4), a ferredoxin (BphA3), and a terminal oxygenase (BphA1A2). [2Fe-2S] cluster serves as cofactor.

It participates in xenobiotic degradation; biphenyl degradation. Ferredoxin component of the biphenyl dioxygenase system that catalyzes the stereospecific dihydroxylation of the aromatic ring of biphenyl, yielding a dihydrodiol compound. Is likely involved in biphenyl degradation that allows growth of Rhodococcus sp. strain RHA1 on biphenyl as the sole source of carbon and energy. The dioxygenase system can also use naphtalene and 4-chlorobiphenyl (4-CB) as substrates, as well as some polychlorinated biphenyls (PCB) such as 2,2'-dichlorobiphenyl, 2,3-dichlorobiphenyl and 2,5,2'-trichlorobiphenyl. It exhibits weak activity toward dibenzofuran and dibenzo-p-dioxin. Electrons are transferred from NADH to the [2Fe-2S] cluster in BphA1 via FAD of BphA4 and [2Fe-2S] cluster of BphA3. In Rhodococcus jostii (strain RHA1), this protein is Biphenyl 2,3-dioxygenase, ferredoxin component.